The sequence spans 294 residues: MPKGTIVKALSGFYYVQNEDGLFQCRGRGNFRNRNIKPLVGDEVVFEAENKTDGYVLEIMERKNELLRPPIANVDRAILVFSAAEPTFSPLLLDRFLVHVEANGIEPLIVISKIDLLTEEELETIKQYRNDYEQLGYKVYLTSTIEQLGLDAIRKEFDDHVSVIAGQSGVGKSSLLNAINPALDIETNQISSHLGRGKHTTRHVELIPFGSGLVADTPGFSSLDFIDMEPEELSHYFPEMRDRLPSCKFRGCTHTQEPKCAVKEALAQGEIREFRYEHYVTFLEEVKTQHKRRF.

In terms of domain architecture, CP-type G spans 63-223; that stretch reads KNELLRPPIA…VADTPGFSSL (161 aa). GTP contacts are provided by residues 112–115 and 166–174; these read SKID and GQSGVGKSS. Zn(2+)-binding residues include cysteine 247, cysteine 252, histidine 254, and cysteine 260.

This sequence belongs to the TRAFAC class YlqF/YawG GTPase family. RsgA subfamily. In terms of assembly, monomer. Associates with 30S ribosomal subunit, binds 16S rRNA. Requires Zn(2+) as cofactor.

It is found in the cytoplasm. Functionally, one of several proteins that assist in the late maturation steps of the functional core of the 30S ribosomal subunit. Helps release RbfA from mature subunits. May play a role in the assembly of ribosomal proteins into the subunit. Circularly permuted GTPase that catalyzes slow GTP hydrolysis, GTPase activity is stimulated by the 30S ribosomal subunit. This is Small ribosomal subunit biogenesis GTPase RsgA from Halalkalibacterium halodurans (strain ATCC BAA-125 / DSM 18197 / FERM 7344 / JCM 9153 / C-125) (Bacillus halodurans).